Consider the following 341-residue polypeptide: MLVLGLETSCDETGVALYDSERGLLADALFSQIDLHRAYGGVVPELASRDHVKRMLPLIRQVLAEADCVPTEIDAIAYTAGPGLVGALLVGASCAQALAFAWGIPALGVHHMEGHLLAPMLEEQPPQFPFVALLVSGGHTQLVRVDGIGQYELLGETLDDAAGEAFDKTAKMIGLNYPGGPEIARLATQGVAGRFVFPRPMTDRPGLDFSFSGLKTFALNTWQQCVSAGDDGEQTRCDISLAFQQAVVETLTIKCKRALKQTGLKRLVIAGGVSANKALRASLEKMLAEMKGNVFYARPEFCTDNGAMIAFAGCQRLQAGQQESLAISVQARWPMEQLSAL.

Fe cation contacts are provided by His-111 and His-115. Substrate-binding positions include 134 to 138 (LVSGG), Asp-167, Gly-180, and Asn-276. Residue Asp-304 participates in Fe cation binding.

The protein belongs to the KAE1 / TsaD family. Fe(2+) serves as cofactor.

Its subcellular location is the cytoplasm. It catalyses the reaction L-threonylcarbamoyladenylate + adenosine(37) in tRNA = N(6)-L-threonylcarbamoyladenosine(37) in tRNA + AMP + H(+). Its function is as follows. Required for the formation of a threonylcarbamoyl group on adenosine at position 37 (t(6)A37) in tRNAs that read codons beginning with adenine. Is involved in the transfer of the threonylcarbamoyl moiety of threonylcarbamoyl-AMP (TC-AMP) to the N6 group of A37, together with TsaE and TsaB. TsaD likely plays a direct catalytic role in this reaction. The polypeptide is tRNA N6-adenosine threonylcarbamoyltransferase (Pseudomonas fluorescens (strain ATCC BAA-477 / NRRL B-23932 / Pf-5)).